A 374-amino-acid polypeptide reads, in one-letter code: Putative heme chaperone HemW-like protein (374 aa).

The Radical SAM core domain occupies 1-231; it reads MKLLGLYINI…EKLLKKSGYK (231 aa).

Belongs to the anaerobic coproporphyrinogen-III oxidase family. HemW subfamily.

It is found in the cytoplasm. Might be a heme chaperone; in E.coli heme binds independently of binding to [4Fe-4S] or S-adenosyl-L-methionine. This is Putative heme chaperone HemW-like protein from Buchnera aphidicola subsp. Baizongia pistaciae (strain Bp).